A 137-amino-acid chain; its full sequence is Large ribosomal subunit protein uL16 (137 aa).

Belongs to the universal ribosomal protein uL16 family. In terms of assembly, part of the 50S ribosomal subunit.

In terms of biological role, binds 23S rRNA and is also seen to make contacts with the A and possibly P site tRNAs. The polypeptide is Large ribosomal subunit protein uL16 (Bartonella bacilliformis (strain ATCC 35685 / KC583 / Herrer 020/F12,63)).